Consider the following 404-residue polypeptide: 4-hydroxyphenylpyruvate dioxygenase (404 aa).

2 VOC domains span residues 28–163 (GYDH…FIQR) and 194–353 (YVDH…IFTK). Residues His197, His280, and Glu364 each coordinate Fe cation.

The protein belongs to the 4HPPD family. It depends on Fe cation as a cofactor.

It catalyses the reaction 3-(4-hydroxyphenyl)pyruvate + O2 = homogentisate + CO2. It functions in the pathway amino-acid degradation; L-phenylalanine degradation; acetoacetate and fumarate from L-phenylalanine: step 3/6. In terms of biological role, key enzyme in the degradation of tyrosine. The protein is 4-hydroxyphenylpyruvate dioxygenase (TFA) of Tetrahymena thermophila.